The primary structure comprises 83 residues: Mitochondrial import inner membrane translocase subunit Tim8 B (83 aa).

Ala2 bears the N-acetylalanine mark. The Twin CX3C motif motif lies at 36-59 (CWDKCVEKPGNRLDSRTENCLSSC). Intrachain disulfides connect Cys36–Cys59 and Cys40–Cys55.

This sequence belongs to the small Tim family. Heterohexamer; possibly composed of 3 copies of TIMM8B and 3 copies of TIMM13, named soluble 70 kDa complex. Associates with the TIM22 complex, whose core is composed of TIMM22. As to expression, ubiquitous, with highest expression in heart, kidney, liver and skeletal muscle.

The protein resides in the mitochondrion inner membrane. Its function is as follows. Probable mitochondrial intermembrane chaperone that participates in the import and insertion of some multi-pass transmembrane proteins into the mitochondrial inner membrane. Also required for the transfer of beta-barrel precursors from the TOM complex to the sorting and assembly machinery (SAM complex) of the outer membrane. Acts as a chaperone-like protein that protects the hydrophobic precursors from aggregation and guide them through the mitochondrial intermembrane space. In Homo sapiens (Human), this protein is Mitochondrial import inner membrane translocase subunit Tim8 B (TIMM8B).